We begin with the raw amino-acid sequence, 302 residues long: uncharacterized protein (302 aa).

Glu-47 is a catalytic residue.

Belongs to the PhzF family.

This is an uncharacterized protein from Mesorhizobium japonicum (strain LMG 29417 / CECT 9101 / MAFF 303099) (Mesorhizobium loti (strain MAFF 303099)).